Here is a 254-residue protein sequence, read N- to C-terminus: Bax inhibitor 1 homolog (254 aa).

Residues 1 to 43 (MASTSNRNFFSSNMTQIPMDEKIRIALQFNNLSQSTKQTLTKV) are Cytoplasmic-facing. Residues 44–64 (YCALAIGILTATVGVLFSMFI) form a helical membrane-spanning segment. The Lumenal segment spans residues 65–66 (YR). A helical transmembrane segment spans residues 67 to 87 (PGFLMTLLLVIGSAILFATTP). The Cytoplasmic segment spans residues 88-98 (RTQDYKTQVKR). A helical membrane pass occupies residues 99–119 (FTLFNLVTFVTGMSSSGLIEL). Over 120–126 (YMDINSS) the chain is Lumenal. Residues 127–147 (IVLNAFMATCGIFISFTLFSL) traverse the membrane as a helical segment. Topologically, residues 148 to 152 (LTNKR) are cytoplasmic. Residues 153–173 (LYIFIGSSLASLSIGIFVLAL) traverse the membrane as a helical segment. The Lumenal segment spans residues 174–187 (TRLFGGYSEPLDQL). The chain crosses the membrane as a helical span at residues 188-208 (FILAILASSVLFIIFDTQIMV). At 209–217 (HRIENLGEK) the chain is on the cytoplasmic side. Residues 218–238 (DVLFHAFILFYDFVDLFRVIL) constitute an intramembrane region (helical). Residues 239 to 254 (KILAKKENKNNNKSRR) lie on the Cytoplasmic side of the membrane.

Belongs to the BI1 family.

Its subcellular location is the endoplasmic reticulum membrane. In Dictyostelium discoideum (Social amoeba), this protein is Bax inhibitor 1 homolog.